Reading from the N-terminus, the 244-residue chain is Phosphoadenosine 5'-phosphosulfate reductase (244 aa).

Cys-239 serves as the catalytic Nucleophile; cysteine thiosulfonate intermediate.

This sequence belongs to the PAPS reductase family. CysH subfamily.

The protein resides in the cytoplasm. The enzyme catalyses [thioredoxin]-disulfide + sulfite + adenosine 3',5'-bisphosphate + 2 H(+) = [thioredoxin]-dithiol + 3'-phosphoadenylyl sulfate. It functions in the pathway sulfur metabolism; hydrogen sulfide biosynthesis; sulfite from sulfate: step 3/3. Catalyzes the formation of sulfite from phosphoadenosine 5'-phosphosulfate (PAPS) using thioredoxin as an electron donor. This Pectobacterium atrosepticum (strain SCRI 1043 / ATCC BAA-672) (Erwinia carotovora subsp. atroseptica) protein is Phosphoadenosine 5'-phosphosulfate reductase.